Reading from the N-terminus, the 80-residue chain is Acyl carrier protein (80 aa).

One can recognise a Carrier domain in the interval glutamate 4–glutamine 79. Serine 39 carries the post-translational modification O-(pantetheine 4'-phosphoryl)serine.

The protein belongs to the acyl carrier protein (ACP) family. In terms of processing, 4'-phosphopantetheine is transferred from CoA to a specific serine of apo-ACP by AcpS. This modification is essential for activity because fatty acids are bound in thioester linkage to the sulfhydryl of the prosthetic group.

The protein localises to the cytoplasm. It functions in the pathway lipid metabolism; fatty acid biosynthesis. Functionally, carrier of the growing fatty acid chain in fatty acid biosynthesis. The chain is Acyl carrier protein from Prochlorococcus marinus (strain SARG / CCMP1375 / SS120).